Here is a 198-residue protein sequence, read N- to C-terminus: Alpha-S1-casein (198 aa).

The signal sequence occupies residues 1 to 15; that stretch reads MKLLILTCLVASAVA. Disordered stretches follow at residues 28–47 and 71–97; these read QTQR…LKEE and SEST…EQKH. A phosphoserine mark is found at S39, S80, S81, S83, S84, and S85.

Belongs to the alpha-casein family. In terms of tissue distribution, mammary gland specific. Secreted in milk.

The protein localises to the secreted. Important role in the capacity of milk to transport calcium phosphate. The sequence is that of Alpha-S1-casein (CSN1S1) from Cavia porcellus (Guinea pig).